We begin with the raw amino-acid sequence, 305 residues long: Ferrochelatase (305 aa).

Residues H182 and E262 each coordinate Fe cation.

This sequence belongs to the ferrochelatase family.

The protein localises to the cytoplasm. It catalyses the reaction heme b + 2 H(+) = protoporphyrin IX + Fe(2+). It functions in the pathway porphyrin-containing compound metabolism; protoheme biosynthesis; protoheme from protoporphyrin-IX: step 1/1. Catalyzes the ferrous insertion into protoporphyrin IX. The sequence is that of Ferrochelatase from Herpetosiphon aurantiacus (strain ATCC 23779 / DSM 785 / 114-95).